The primary structure comprises 185 residues: Anaphase-promoting complex subunit 10 (185 aa).

T2 bears the N-acetylthreonine mark. In terms of domain architecture, DOC spans T2–R185. Position 169 is an N6-acetyllysine (K169).

It belongs to the APC10 family. In terms of assembly, the mammalian APC/C is composed at least of 14 distinct subunits ANAPC1, ANAPC2, CDC27/APC3, ANAPC4, ANAPC5, CDC16/APC6, ANAPC7, CDC23/APC8, ANAPC10, ANAPC11, CDC26/APC12, ANAPC13, ANAPC15 and ANAPC16 that assemble into a complex of at least 19 chains with a combined molecular mass of around 1.2 MDa; APC/C interacts with FZR1 and FBXO5. The C-terminus of APC10 binds to CDC27/APC3. Interacts with PIWIL1; interaction only takes place when PIWIL1 binds piRNA. Interacts with FBXO43; the interaction is direct.

It participates in protein modification; protein ubiquitination. Its function is as follows. Component of the anaphase promoting complex/cyclosome (APC/C), a cell cycle-regulated E3 ubiquitin ligase that controls progression through mitosis and the G1 phase of the cell cycle. The APC/C complex acts by mediating ubiquitination and subsequent degradation of target proteins: it mainly mediates the formation of 'Lys-11'-linked polyubiquitin chains and, to a lower extent, the formation of 'Lys-48'- and 'Lys-63'-linked polyubiquitin chains. The APC/C complex catalyzes assembly of branched 'Lys-11'-/'Lys-48'-linked branched ubiquitin chains on target proteins. The chain is Anaphase-promoting complex subunit 10 (ANAPC10) from Homo sapiens (Human).